We begin with the raw amino-acid sequence, 94 residues long: Phosphoribosyl-ATP pyrophosphatase (94 aa).

This sequence belongs to the PRA-PH family.

Its subcellular location is the cytoplasm. It carries out the reaction 1-(5-phospho-beta-D-ribosyl)-ATP + H2O = 1-(5-phospho-beta-D-ribosyl)-5'-AMP + diphosphate + H(+). It functions in the pathway amino-acid biosynthesis; L-histidine biosynthesis; L-histidine from 5-phospho-alpha-D-ribose 1-diphosphate: step 2/9. The polypeptide is Phosphoribosyl-ATP pyrophosphatase (hisE) (Saccharolobus solfataricus (strain ATCC 35092 / DSM 1617 / JCM 11322 / P2) (Sulfolobus solfataricus)).